The sequence spans 138 residues: uncharacterized protein (138 aa).

Residues 1-27 are disordered; it reads MEGELIENNGLDIYDTSETPKKRGRPA.

This is an uncharacterized protein from Escherichia coli (strain K12).